The following is a 338-amino-acid chain: POU domain, class 4, transcription factor 3 (338 aa).

A POU-IV box motif is present at residues 56 to 65; sequence RAEALAAVDI. Residues 179–256 form the POU-specific domain; that stretch reads DVESDPRELE…VLQAWLEEAE (78 aa). A DNA-binding region (homeobox) is located at residues 274 to 333; the sequence is RKRKRTSIAAPEKRSLEAYFAIQPRPSSEKIAAIAEKLDLKKNVVRVWFCNQRQKQKRMK.

The protein belongs to the POU transcription factor family. Class-4 subfamily. As to quaternary structure, interacts with ISL1. Brain.

It is found in the nucleus. Its subcellular location is the cytoplasm. In terms of biological role, acts as a transcriptional activator. Acts by binding to sequences related to the consensus octamer motif 5'-ATGCAAAT-3' in the regulatory regions of its target genes. Involved in the auditory system development, required for terminal differentiation of hair cells in the inner ear. In Mus musculus (Mouse), this protein is POU domain, class 4, transcription factor 3.